A 564-amino-acid chain; its full sequence is Proline--tRNA ligase (564 aa).

The protein belongs to the class-II aminoacyl-tRNA synthetase family. ProS type 1 subfamily. Homodimer.

It localises to the cytoplasm. It catalyses the reaction tRNA(Pro) + L-proline + ATP = L-prolyl-tRNA(Pro) + AMP + diphosphate. Its function is as follows. Catalyzes the attachment of proline to tRNA(Pro) in a two-step reaction: proline is first activated by ATP to form Pro-AMP and then transferred to the acceptor end of tRNA(Pro). As ProRS can inadvertently accommodate and process non-cognate amino acids such as alanine and cysteine, to avoid such errors it has two additional distinct editing activities against alanine. One activity is designated as 'pretransfer' editing and involves the tRNA(Pro)-independent hydrolysis of activated Ala-AMP. The other activity is designated 'posttransfer' editing and involves deacylation of mischarged Ala-tRNA(Pro). The misacylated Cys-tRNA(Pro) is not edited by ProRS. This chain is Proline--tRNA ligase, found in Xanthomonas oryzae pv. oryzae (strain KACC10331 / KXO85).